Consider the following 237-residue polypeptide: uncharacterized protein (237 aa).

One can recognise a DPCK domain in the interval 13 to 218 (VVGLSGGVAT…KSWKPYIFRV (206 aa)). 18–25 (GGVATGKS) is an ATP binding site.

The protein belongs to the CoaE family.

This is an uncharacterized protein from Caenorhabditis elegans.